A 127-amino-acid chain; its full sequence is Large ribosomal subunit protein bL17 (127 aa).

It belongs to the bacterial ribosomal protein bL17 family. Part of the 50S ribosomal subunit. Contacts protein L32.

The chain is Large ribosomal subunit protein bL17 from Ligilactobacillus salivarius (strain UCC118) (Lactobacillus salivarius).